Reading from the N-terminus, the 153-residue chain is 6,7-dimethyl-8-ribityllumazine synthase (153 aa).

5-amino-6-(D-ribitylamino)uracil is bound by residues Phe-21, 55–57 (AFE), and 79–81 (TVI). A (2S)-2-hydroxy-3-oxobutyl phosphate-binding site is contributed by 84-85 (AT). His-87 (proton donor) is an active-site residue. Phe-112 provides a ligand contact to 5-amino-6-(D-ribitylamino)uracil. Arg-126 contacts (2S)-2-hydroxy-3-oxobutyl phosphate.

This sequence belongs to the DMRL synthase family. In terms of assembly, forms an icosahedral capsid composed of 60 subunits, arranged as a dodecamer of pentamers.

The catalysed reaction is (2S)-2-hydroxy-3-oxobutyl phosphate + 5-amino-6-(D-ribitylamino)uracil = 6,7-dimethyl-8-(1-D-ribityl)lumazine + phosphate + 2 H2O + H(+). It functions in the pathway cofactor biosynthesis; riboflavin biosynthesis; riboflavin from 2-hydroxy-3-oxobutyl phosphate and 5-amino-6-(D-ribitylamino)uracil: step 1/2. Functionally, catalyzes the formation of 6,7-dimethyl-8-ribityllumazine by condensation of 5-amino-6-(D-ribitylamino)uracil with 3,4-dihydroxy-2-butanone 4-phosphate. This is the penultimate step in the biosynthesis of riboflavin. The protein is 6,7-dimethyl-8-ribityllumazine synthase of Bacillus cereus (strain ATCC 10987 / NRS 248).